The primary structure comprises 214 residues: Inner membrane-spanning protein YciB (214 aa).

The next 5 helical transmembrane spans lie at 11–31 (ILFF…VAII), 50–70 (MHII…ILQD), 81–101 (VNWG…KPII), 119–139 (LSYM…YVAY), and 149–169 (FKLF…GVYI).

Belongs to the YciB family.

It localises to the cell inner membrane. Its function is as follows. Plays a role in cell envelope biogenesis, maintenance of cell envelope integrity and membrane homeostasis. The polypeptide is Inner membrane-spanning protein YciB (Hydrogenovibrio crunogenus (strain DSM 25203 / XCL-2) (Thiomicrospira crunogena)).